Reading from the N-terminus, the 209-residue chain is Large ribosomal subunit protein uL3 (209 aa).

Residues 132–153 form a disordered region; the sequence is ATHGNSLSHRVPGSIGQNQTPG. Glutamine 150 bears the N5-methylglutamine mark.

This sequence belongs to the universal ribosomal protein uL3 family. Part of the 50S ribosomal subunit. Forms a cluster with proteins L14 and L19. In terms of processing, methylated by PrmB.

Its function is as follows. One of the primary rRNA binding proteins, it binds directly near the 3'-end of the 23S rRNA, where it nucleates assembly of the 50S subunit. This is Large ribosomal subunit protein uL3 from Erwinia tasmaniensis (strain DSM 17950 / CFBP 7177 / CIP 109463 / NCPPB 4357 / Et1/99).